A 125-amino-acid polypeptide reads, in one-letter code: MTKTKQEIYNKRPTSPHLTIYKPQISSTLSILHRMTGVALFFAVSILAWWFILSKFDSNYIKLANCCCIIKICLILTSFAWFYHLCNGIRHLFWDIGLGFSIKAVNLTGWSVVICSVLFTILLWV.

The Cytoplasmic portion of the chain corresponds to 1-29; sequence MTKTKQEIYNKRPTSPHLTIYKPQISSTL. Residues 30–55 form a helical membrane-spanning segment; sequence SILHRMTGVALFFAVSILAWWFILSK. Residues 56–68 lie on the Periplasmic side of the membrane; the sequence is FDSNYIKLANCCC. The helical transmembrane segment at 69–89 threads the bilayer; sequence IIKICLILTSFAWFYHLCNGI. Heme is bound at residue His-84. The Cytoplasmic portion of the chain corresponds to 90 to 104; it reads RHLFWDIGLGFSIKA. Residues 105-125 traverse the membrane as a helical segment; sequence VNLTGWSVVICSVLFTILLWV.

The protein belongs to the cytochrome b560 family. As to quaternary structure, part of an enzyme complex containing four subunits: a flavoprotein, an iron-sulfur protein, plus two membrane-anchoring proteins, SdhC and SdhD. The complex can form homotrimers. The cofactor is heme.

It localises to the cell inner membrane. It functions in the pathway carbohydrate metabolism; tricarboxylic acid cycle. Membrane-anchoring subunit of succinate dehydrogenase (SDH). The polypeptide is Succinate dehydrogenase cytochrome b556 subunit (sdhC) (Rickettsia bellii (strain RML369-C)).